Reading from the N-terminus, the 331-residue chain is Oxygen-evolving enhancer protein 1-2, chloroplastic (331 aa).

The transit peptide at 1 to 57 (MATSLQAAATFLQPAKIAASPSRNVHLRSNQTVGKSFGLDSSQARLTCSLHSDLKDF) directs the protein to the chloroplast. The transit peptide at 58 to 84 (AGKCSDAAKIAGFALATSALVVSGAGA) directs the protein to the thylakoid.

It belongs to the PsbO family.

The protein resides in the plastid. Its subcellular location is the chloroplast thylakoid membrane. Stabilizes the manganese cluster which is the primary site of water splitting. Regulates dephosphorylation and turnover of the PSII reaction center D1 protein. The chain is Oxygen-evolving enhancer protein 1-2, chloroplastic (PSBO2) from Arabidopsis thaliana (Mouse-ear cress).